A 341-amino-acid polypeptide reads, in one-letter code: MLLLHYFNLSHFQVNDHFYPHMRNFLYGETAFYVADTINMMFYIWVLFSAQQFHFNFTLVSGTQYVIHFFDNLAIIVMRLHSLLGFTDDFDIGSNVVFNGAMTFSVYCIVAAMCSLPFSILERCFATRYLKDYEANSRAYISYALVFLLNFIGIIGAILLQNKNNTIFVVAFLMILNLFALLTNQFLRTWNLKKYEECHSNVSIRFQRGGKYSLAKRFQISENIKSLHMLNFIILYMGFMNVCLVISVLFSSFDISPERQAICSLALDASIFFYSFAIPQIMTCFCHKWKVQTNTFRIRIGCLRTGKVNLEPLRDTFGGDMRGSVSMNRYFDQLQDSWENA.

The next 7 helical transmembrane spans lie at 30–50, 57–77, 101–121, 140–160, 167–187, 230–250, and 262–282; these read TAFYVADTINMMFYIWVLFSA, FTLVSGTQYVIHFFDNLAIIV, AMTFSVYCIVAAMCSLPFSIL, YISYALVFLLNFIGIIGAILL, IFVVAFLMILNLFALLTNQFL, LNFIILYMGFMNVCLVISVLF, and ICSLALDASIFFYSFAIPQIM.

Belongs to the nematode receptor-like protein sre family.

The protein localises to the membrane. The sequence is that of Serpentine receptor class epsilon-12 (sre-12) from Caenorhabditis elegans.